We begin with the raw amino-acid sequence, 578 residues long: Alpha-(1,6)-fucosyltransferase (578 aa).

The Cytoplasmic portion of the chain corresponds to 1–9 (MRPWTGSWR). A helical; Signal-anchor for type II membrane protein transmembrane segment spans residues 10-30 (WIMLILFAWGTLLFYIGGHLV). Residues 31–578 (RDNENPDHSS…KYPTYQEAEK (548 aa)) are Lumenal-facing. 3 cysteine pairs are disulfide-bonded: Cys-207–Cys-269, Cys-215–Cys-233, and Cys-221–Cys-225. Residues 209-496 (KAKKLVCNIN…PDASAHFHSL (288 aa)) enclose the GT23 domain. The SH3-binding motif lies at 302-308 (PRPPYLP). The interval 368–369 (RR) is important for donor substrate binding. A disulfide bridge links Cys-468 with Cys-475. One can recognise an SH3 domain in the interval 505–566 (QNAHNQLAIY…PSYKVKEKIE (62 aa)).

The protein belongs to the glycosyltransferase 23 family.

The protein resides in the golgi apparatus. Its subcellular location is the golgi stack membrane. The enzyme catalyses N(4)-{beta-D-GlcNAc-(1-&gt;2)-alpha-D-Man-(1-&gt;3)-[beta-D-GlcNAc-(1-&gt;2)-alpha-D-Man-(1-&gt;6)]-beta-D-Man-(1-&gt;4)-beta-D-GlcNAc-(1-&gt;4)-beta-D-GlcNAc}-L-asparaginyl-[protein] + GDP-beta-L-fucose = an N(4)-{beta-D-GlcNAc-(1-&gt;2)-alpha-D-Man-(1-&gt;3)-[beta-D-GlcNAc-(1-&gt;2)-alpha-D-Man-(1-&gt;6)]-beta-D-Man-(1-&gt;4)-beta-D-GlcNAc-(1-&gt;4)-[alpha-L-Fuc-(1-&gt;6)]-beta-D-GlcNAc}-L-asparaginyl-[protein] + GDP + H(+). Its pathway is protein modification; protein glycosylation. Functionally, catalyzes the addition of fucose in alpha 1-6 linkage to the first GlcNAc residue, next to the peptide chains in N-glycans. The sequence is that of Alpha-(1,6)-fucosyltransferase (fut8) from Xenopus tropicalis (Western clawed frog).